A 328-amino-acid polypeptide reads, in one-letter code: Beta-ribofuranosylphenol 5'-phosphate synthase (328 aa).

It belongs to the beta-RFA-P synthase family. As to quaternary structure, homodimer. Mg(2+) serves as cofactor.

It carries out the reaction 5-phospho-alpha-D-ribose 1-diphosphate + 4-hydroxybenzoate + H(+) = 4-(beta-D-ribofuranosyl)phenol 5'-phosphate + CO2 + diphosphate. It catalyses the reaction 4-aminobenzoate + 5-phospho-alpha-D-ribose 1-diphosphate + H(+) = 4-(beta-D-ribofuranosyl)aminobenzene 5'-phosphate + CO2 + diphosphate. The protein operates within cofactor biosynthesis; 5,6,7,8-tetrahydromethanopterin biosynthesis. Catalyzes the condensation of 4-hydroxybenzoate (HB) with 5-phospho-alpha-D-ribose 1-diphosphate (PRPP) to produce beta-ribofuranosylphenol 5'-phosphate (beta-RFH-P). Also catalyzes the condensation of 4-aminobenzoate (pABA) with PRPP to produce beta-ribofuranosylaminobenzene 5'-phosphate (beta-RFA-P). Only 4-hydroxybenzoate is known to be biosynthesized by methanogenic archaea, but 4-aminobenzoate can be used as substrate by growing methanogens when it is present in the growth medium. The sequence is that of Beta-ribofuranosylphenol 5'-phosphate synthase from Methanocaldococcus jannaschii (strain ATCC 43067 / DSM 2661 / JAL-1 / JCM 10045 / NBRC 100440) (Methanococcus jannaschii).